Consider the following 475-residue polypeptide: Ribulose bisphosphate carboxylase large chain (475 aa).

Residues 1-2 (MS) constitute a propeptide that is removed on maturation. Pro-3 bears the N-acetylproline mark. Lys-14 is modified (N6,N6,N6-trimethyllysine). Substrate is bound by residues Asn-123 and Thr-173. The active-site Proton acceptor is Lys-175. A substrate-binding site is contributed by Lys-177. Positions 201, 203, and 204 each coordinate Mg(2+). Lys-201 carries the N6-carboxylysine modification. His-294 functions as the Proton acceptor in the catalytic mechanism. Arg-295, His-327, and Ser-379 together coordinate substrate.

It belongs to the RuBisCO large chain family. Type I subfamily. Heterohexadecamer of 8 large chains and 8 small chains. Mg(2+) serves as cofactor.

The protein localises to the plastid. Its subcellular location is the chloroplast. The catalysed reaction is 2 (2R)-3-phosphoglycerate + 2 H(+) = D-ribulose 1,5-bisphosphate + CO2 + H2O. The enzyme catalyses D-ribulose 1,5-bisphosphate + O2 = 2-phosphoglycolate + (2R)-3-phosphoglycerate + 2 H(+). Its function is as follows. RuBisCO catalyzes two reactions: the carboxylation of D-ribulose 1,5-bisphosphate, the primary event in carbon dioxide fixation, as well as the oxidative fragmentation of the pentose substrate in the photorespiration process. Both reactions occur simultaneously and in competition at the same active site. In Coleochaete orbicularis (Charophycean green alga), this protein is Ribulose bisphosphate carboxylase large chain.